A 231-amino-acid chain; its full sequence is 5'-methylthioadenosine/S-adenosylhomocysteine nucleosidase (231 aa).

Residue glutamate 12 is the Proton acceptor of the active site. Substrate-binding positions include glycine 78, methionine 153, and 174 to 175 (ME). Aspartate 198 (proton donor) is an active-site residue.

It belongs to the PNP/UDP phosphorylase family. MtnN subfamily.

The catalysed reaction is S-adenosyl-L-homocysteine + H2O = S-(5-deoxy-D-ribos-5-yl)-L-homocysteine + adenine. It catalyses the reaction S-methyl-5'-thioadenosine + H2O = 5-(methylsulfanyl)-D-ribose + adenine. It carries out the reaction 5'-deoxyadenosine + H2O = 5-deoxy-D-ribose + adenine. The protein operates within amino-acid biosynthesis; L-methionine biosynthesis via salvage pathway; S-methyl-5-thio-alpha-D-ribose 1-phosphate from S-methyl-5'-thioadenosine (hydrolase route): step 1/2. In terms of biological role, catalyzes the irreversible cleavage of the glycosidic bond in both 5'-methylthioadenosine (MTA) and S-adenosylhomocysteine (SAH/AdoHcy) to adenine and the corresponding thioribose, 5'-methylthioribose and S-ribosylhomocysteine, respectively. Also cleaves 5'-deoxyadenosine, a toxic by-product of radical S-adenosylmethionine (SAM) enzymes, into 5-deoxyribose and adenine. This is 5'-methylthioadenosine/S-adenosylhomocysteine nucleosidase from Bacillus velezensis (strain DSM 23117 / BGSC 10A6 / LMG 26770 / FZB42) (Bacillus amyloliquefaciens subsp. plantarum).